A 588-amino-acid polypeptide reads, in one-letter code: BTB/POZ domain-containing protein At3g26490 (588 aa).

The region spanning 28-99 is the BTB domain; that stretch reads NDLVIQVKST…CYGITITLCA (72 aa). Positions 218-507 constitute an NPH3 domain; that stretch reads RWWGEDLAEL…VQILFVEQAR (290 aa). A phosphoserine mark is found at Ser-376 and Ser-378. Tyr-448 is subject to Phosphotyrosine. The disordered stretch occupies residues 529–554; sequence FTTRREEGGQEEEERDETKPSGGFLQ.

It belongs to the NPH3 family.

It functions in the pathway protein modification; protein ubiquitination. Functionally, may act as a substrate-specific adapter of an E3 ubiquitin-protein ligase complex (CUL3-RBX1-BTB) which mediates the ubiquitination and subsequent proteasomal degradation of target proteins. This Arabidopsis thaliana (Mouse-ear cress) protein is BTB/POZ domain-containing protein At3g26490.